The sequence spans 347 residues: DNA-directed RNA polymerase subunit alpha (347 aa).

Residues Met-1–Asn-226 form an alpha N-terminal domain (alpha-NTD) region. The segment at Ala-241–Leu-347 is alpha C-terminal domain (alpha-CTD).

Belongs to the RNA polymerase alpha chain family. Homodimer. The RNAP catalytic core consists of 2 alpha, 1 beta, 1 beta' and 1 omega subunit. When a sigma factor is associated with the core the holoenzyme is formed, which can initiate transcription.

It catalyses the reaction RNA(n) + a ribonucleoside 5'-triphosphate = RNA(n+1) + diphosphate. Functionally, DNA-dependent RNA polymerase catalyzes the transcription of DNA into RNA using the four ribonucleoside triphosphates as substrates. The polypeptide is DNA-directed RNA polymerase subunit alpha (Mycobacterium avium (strain 104)).